A 216-amino-acid chain; its full sequence is Probable csgAB operon transcriptional regulatory protein (216 aa).

The 66-residue stretch at 149–214 (NSTESALLTH…QAVSWANDNL (66 aa)) folds into the HTH luxR-type domain. The segment at residues 173-192 (NNEIARSLFISENTVKTHLY) is a DNA-binding region (H-T-H motif).

The master regulator for adhesive curli fimbriae expression; necessary for transcription of the csgAB operon. Plays a positive role in biofilm formation. In Salmonella typhimurium (strain LT2 / SGSC1412 / ATCC 700720), this protein is Probable csgAB operon transcriptional regulatory protein.